The primary structure comprises 196 residues: NAD(P)H-quinone oxidoreductase subunit I (196 aa).

2 consecutive 4Fe-4S ferredoxin-type domains span residues 54-83 (GRIH…VDWV) and 94-123 (KHYS…VTEE). [4Fe-4S] cluster-binding residues include cysteine 63, cysteine 66, cysteine 69, cysteine 73, cysteine 103, cysteine 106, cysteine 109, and cysteine 113. The disordered stretch occupies residues 174 to 196 (PAGAQRAGERPEAIANTAKSSEN).

The protein belongs to the complex I 23 kDa subunit family. As to quaternary structure, NDH-1 is composed of at least 11 different subunits. [4Fe-4S] cluster serves as cofactor.

Its subcellular location is the cellular thylakoid membrane. It catalyses the reaction a plastoquinone + NADH + (n+1) H(+)(in) = a plastoquinol + NAD(+) + n H(+)(out). It carries out the reaction a plastoquinone + NADPH + (n+1) H(+)(in) = a plastoquinol + NADP(+) + n H(+)(out). Its function is as follows. NDH-1 shuttles electrons from an unknown electron donor, via FMN and iron-sulfur (Fe-S) centers, to quinones in the respiratory and/or the photosynthetic chain. The immediate electron acceptor for the enzyme in this species is believed to be plastoquinone. Couples the redox reaction to proton translocation, and thus conserves the redox energy in a proton gradient. This chain is NAD(P)H-quinone oxidoreductase subunit I, found in Thermosynechococcus vestitus (strain NIES-2133 / IAM M-273 / BP-1).